A 94-amino-acid chain; its full sequence is Acylphosphatase (94 aa).

One can recognise an Acylphosphatase-like domain in the interval 8–94; that stretch reads RLTAWVHGRV…REQITGFHER (87 aa). Active-site residues include Arg-23 and Asn-41.

This sequence belongs to the acylphosphatase family.

The enzyme catalyses an acyl phosphate + H2O = a carboxylate + phosphate + H(+). The protein is Acylphosphatase (acyP) of Mycobacterium sp. (strain KMS).